Reading from the N-terminus, the 556-residue chain is MDAHGVLQFLLFLALVLALTPILGRFMTWLFQAPVGRVEDGFYRLLGIDPTREQGWAAYAVSLLIFHLLAVFGLYALQRFQGMLPLNPAGQGAVPPDLAFNTAISFATNTNWQNYGGESTMSHLTQMAGLTVHNFLSAAAGIAVAVALMRGFARHSTRTVGNFYVDITRVTLGLLLPLCLVGALVLVGQGVPQNFDAPVTVTTLEGVSQVIAQGPVASQMMIKHLGTNGGGFFNANAAHPYENPNALVNLIHMLAIFAIGAALTNTFGRMAGDRRQGWALLGAMAALFLAGLGAAWWAEAQGNPVLGGIANMEGKEVRLGVAASMLFAVVTTVTSCGAVNAMHDSLLPLAGMIPMVNMLLGEVVVGGVGSGLYGMVVFALLTVFIAGLMVGRTPEYLGKKIEAREIKLAVIAILATPVAVLGIGGLAITLPMGQAGIAAAGPHGLSEVLYAFASAGNNNGSAFGGLSGNTIFYNATMAAAMMIGRFVVMIPVLAIAGALAAKMAVPASAGTFPTHGWLFVVLLVGIVLVVGGLTYFPVLVLGPVVEHLALSAGILF.

A run of 12 helical transmembrane segments spans residues 3–23 (AHGVLQFLLFLALVLALTPIL), 57–77 (AAYAVSLLIFHLLAVFGLYAL), 129–149 (GLTVHNFLSAAAGIAVAVALM), 172–192 (LGLLLPLCLVGALVLVGQGVP), 247–267 (LVNLIHMLAIFAIGAALTNTF), 278–298 (WALLGAMAALFLAGLGAAWWA), 319–339 (LGVAASMLFAVVTTVTSCGAV), 346–366 (LLPLAGMIPMVNMLLGEVVVG), 371–391 (GLYGMVVFALLTVFIAGLMVG), 408–428 (LAVIAILATPVAVLGIGGLAI), 486–506 (FVVMIPVLAIAGALAAKMAVP), and 516–536 (GWLFVVLLVGIVLVVGGLTYF).

Belongs to the KdpA family. In terms of assembly, the system is composed of three essential subunits: KdpA, KdpB and KdpC.

It localises to the cell inner membrane. Its function is as follows. Part of the high-affinity ATP-driven potassium transport (or Kdp) system, which catalyzes the hydrolysis of ATP coupled with the electrogenic transport of potassium into the cytoplasm. This subunit binds the periplasmic potassium ions and delivers the ions to the membrane domain of KdpB through an intramembrane tunnel. This chain is Potassium-transporting ATPase potassium-binding subunit, found in Paramagnetospirillum magneticum (strain ATCC 700264 / AMB-1) (Magnetospirillum magneticum).